A 261-amino-acid polypeptide reads, in one-letter code: Putative hydro-lyase SAR11_0660 (261 aa).

Belongs to the D-glutamate cyclase family.

The chain is Putative hydro-lyase SAR11_0660 from Pelagibacter ubique (strain HTCC1062).